Consider the following 109-residue polypeptide: uncharacterized protein (109 aa).

Positions Tyr-67–Arg-96 are disordered. Over residues Arg-78 to Pro-87 the composition is skewed to polar residues.

This is an uncharacterized protein from Saccharomyces cerevisiae (strain ATCC 204508 / S288c) (Baker's yeast).